Reading from the N-terminus, the 550-residue chain is Glucose-6-phosphate isomerase 2 (550 aa).

Glu-359 (proton donor) is an active-site residue. Active-site residues include His-390 and Lys-514.

The protein belongs to the GPI family.

It is found in the cytoplasm. The enzyme catalyses alpha-D-glucose 6-phosphate = beta-D-fructose 6-phosphate. The protein operates within carbohydrate biosynthesis; gluconeogenesis. It participates in carbohydrate degradation; glycolysis; D-glyceraldehyde 3-phosphate and glycerone phosphate from D-glucose: step 2/4. In terms of biological role, catalyzes the reversible isomerization of glucose-6-phosphate to fructose-6-phosphate. In Streptomyces avermitilis (strain ATCC 31267 / DSM 46492 / JCM 5070 / NBRC 14893 / NCIMB 12804 / NRRL 8165 / MA-4680), this protein is Glucose-6-phosphate isomerase 2.